We begin with the raw amino-acid sequence, 230 residues long: MYDIKKWRHIFKLDPAKHISDDDLDAICMSQTDAIMIGGTDDVTEDNVIHLMSRIRRYPLPLVLEISNIESVMPGFDFYFVPTVLNSTDVAFHNGTLLEALKTYGHSIDFEEVIFEGYVVCNADSKVAKHTKANTDLTTEDLEAYAQMVNHMYRLPVMYIEYSGIYGDVSKVQAVSEHLTETQLFYGGGISSEQQATEMAAIADTIIVGDIIYKDIKKALKTVKIKESSK.

K12 is a binding site for sn-glycerol 1-phosphate. D14 and T40 together coordinate Mg(2+). Sn-glycerol 1-phosphate is bound by residues 159-164 (YIEYSG), G189, and 209-210 (GD).

It belongs to the GGGP/HepGP synthase family. Group I subfamily. As to quaternary structure, homodimer. Requires Mg(2+) as cofactor.

The enzyme catalyses sn-glycerol 1-phosphate + all-trans-heptaprenyl diphosphate = 3-heptaprenyl-sn-glycero-1-phosphate + diphosphate. The protein operates within membrane lipid metabolism; glycerophospholipid metabolism. Functionally, prenyltransferase that catalyzes in vivo the transfer of the heptaprenyl moiety of heptaprenyl pyrophosphate (HepPP; 35 carbon atoms) to the C3 hydroxyl of sn-glycerol-1-phosphate (G1P), producing heptaprenylglyceryl phosphate (HepGP). This reaction is an ether-bond-formation step in the biosynthesis of archaea-type G1P-based membrane lipids found in Bacillales. The polypeptide is Heptaprenylglyceryl phosphate synthase (Staphylococcus aureus (strain JH1)).